A 710-amino-acid polypeptide reads, in one-letter code: Interferon-induced GTP-binding protein Mx2 (710 aa).

The disordered stretch occupies residues 1–87 (MSLSFRPLKY…RSKGPENNLY (87 aa)). Polar residues-rich tracts occupy residues 39 to 50 (QTMSPPQWQVEE) and 58 to 79 (NNFS…QQRS). The 272-residue stretch at 112–383 (DLALPAIAVI…LIWHINKSLP (272 aa)) folds into the Dynamin-type G domain. Residues 122–129 (GDQSSGKS) form a G1 motif region. 122–129 (GDQSSGKS) contributes to the GTP binding site. The G2 motif stretch occupies residues 147-149 (ITR). The interval 221-224 (DLPG) is G3 motif. GTP contacts are provided by residues 221 to 225 (DLPGI) and 290 to 293 (TKPD). Residues 290–293 (TKPD) form a G4 motif region. Residues 322–325 (KCRG) are G5 motif. The GED domain maps to 619 to 710 (IVEIGVHLNA…ALYEFPHFKG (92 aa)).

The protein belongs to the TRAFAC class dynamin-like GTPase superfamily. Dynamin/Fzo/YdjA family.

The protein resides in the cytoplasm. It is found in the nucleus. Its function is as follows. Interferon-induced dynamin-like GTPase with antiviral activity against vesicular stomatitis virus (VSV). The protein is Interferon-induced GTP-binding protein Mx2 (MX2) of Bubalus bubalis (Domestic water buffalo).